The primary structure comprises 191 residues: Peptidyl-tRNA hydrolase (191 aa).

Tyr16 lines the tRNA pocket. His21 acts as the Proton acceptor in catalysis. TRNA contacts are provided by Tyr67, Asn69, and Asn115.

This sequence belongs to the PTH family. As to quaternary structure, monomer.

It localises to the cytoplasm. It carries out the reaction an N-acyl-L-alpha-aminoacyl-tRNA + H2O = an N-acyl-L-amino acid + a tRNA + H(+). In terms of biological role, hydrolyzes ribosome-free peptidyl-tRNAs (with 1 or more amino acids incorporated), which drop off the ribosome during protein synthesis, or as a result of ribosome stalling. Functionally, catalyzes the release of premature peptidyl moieties from peptidyl-tRNA molecules trapped in stalled 50S ribosomal subunits, and thus maintains levels of free tRNAs and 50S ribosomes. In Wigglesworthia glossinidia brevipalpis, this protein is Peptidyl-tRNA hydrolase.